Reading from the N-terminus, the 387-residue chain is Patatin-01 (387 aa).

A signal peptide spans 1 to 23 (MATTKSFLILSVMILATTSSTFA). Positions 32-230 (LSIDGGGIKG…TVADPALLSV (199 aa)) constitute a PNPLA domain. The short motif at 36–41 (GGGIKG) is the GXGXXG element. A GXSXG motif is present at residues 75 to 79 (GTSTG). The Nucleophile role is filled by Ser77. The N-linked (GlcNAc...) asparagine glycan is linked to Asn115. Asp216 acts as the Proton acceptor in catalysis. The DGA/G motif lies at 216-218 (DGA). The stretch at 361 to 385 (ETYEEALKRFAKLLSDRKKLRANKA) forms a coiled coil.

It belongs to the patatin family. Tuber.

Its subcellular location is the vacuole. Its function is as follows. Probable lipolytic acyl hydrolase (LAH), an activity which is thought to be involved in the response of tubers to pathogens. This Solanum tuberosum (Potato) protein is Patatin-01.